Reading from the N-terminus, the 123-residue chain is TYMS opposite strand protein (123 aa).

The disordered stretch occupies residues 57 to 111 (MRPLPRRIEVRTKRGPQRPAAPERSPQPRLPPSRHPSRRGPRRHLSGCSAPACRI). Residues 91–101 (HPSRRGPRRHL) are compositionally biased toward basic residues.

The polypeptide is TYMS opposite strand protein (TYMSOS) (Homo sapiens (Human)).